The sequence spans 288 residues: Phosphatidylserine decarboxylase proenzyme (288 aa).

Residues Asp-95, His-152, and Ser-255 each act as charge relay system; for autoendoproteolytic cleavage activity in the active site. Catalysis depends on Ser-255, which acts as the Schiff-base intermediate with substrate; via pyruvic acid; for decarboxylase activity. Ser-255 carries the pyruvic acid (Ser); by autocatalysis modification.

The protein belongs to the phosphatidylserine decarboxylase family. PSD-B subfamily. Prokaryotic type I sub-subfamily. In terms of assembly, heterodimer of a large membrane-associated beta subunit and a small pyruvoyl-containing alpha subunit. Requires pyruvate as cofactor. Post-translationally, is synthesized initially as an inactive proenzyme. Formation of the active enzyme involves a self-maturation process in which the active site pyruvoyl group is generated from an internal serine residue via an autocatalytic post-translational modification. Two non-identical subunits are generated from the proenzyme in this reaction, and the pyruvate is formed at the N-terminus of the alpha chain, which is derived from the carboxyl end of the proenzyme. The autoendoproteolytic cleavage occurs by a canonical serine protease mechanism, in which the side chain hydroxyl group of the serine supplies its oxygen atom to form the C-terminus of the beta chain, while the remainder of the serine residue undergoes an oxidative deamination to produce ammonia and the pyruvoyl prosthetic group on the alpha chain. During this reaction, the Ser that is part of the protease active site of the proenzyme becomes the pyruvoyl prosthetic group, which constitutes an essential element of the active site of the mature decarboxylase.

The protein localises to the cell membrane. The catalysed reaction is a 1,2-diacyl-sn-glycero-3-phospho-L-serine + H(+) = a 1,2-diacyl-sn-glycero-3-phosphoethanolamine + CO2. It functions in the pathway phospholipid metabolism; phosphatidylethanolamine biosynthesis; phosphatidylethanolamine from CDP-diacylglycerol: step 2/2. Catalyzes the formation of phosphatidylethanolamine (PtdEtn) from phosphatidylserine (PtdSer). The chain is Phosphatidylserine decarboxylase proenzyme from Methylococcus capsulatus (strain ATCC 33009 / NCIMB 11132 / Bath).